Consider the following 271-residue polypeptide: Elongation factor Ts (271 aa).

The segment at 76-79 (TDFV) is involved in Mg(2+) ion dislocation from EF-Tu.

Belongs to the EF-Ts family.

The protein localises to the cytoplasm. Functionally, associates with the EF-Tu.GDP complex and induces the exchange of GDP to GTP. It remains bound to the aminoacyl-tRNA.EF-Tu.GTP complex up to the GTP hydrolysis stage on the ribosome. The protein is Elongation factor Ts of Saccharopolyspora erythraea (strain ATCC 11635 / DSM 40517 / JCM 4748 / NBRC 13426 / NCIMB 8594 / NRRL 2338).